We begin with the raw amino-acid sequence, 25 residues long: Bioremediase (25 aa).

An Alpha-carbonic anhydrase domain is found at aspartate 1–alanine 25. Residues aspartate 1–alanine 25 form a disordered region.

This sequence belongs to the alpha-carbonic anhydrase family. Zn(2+) is required as a cofactor.

In terms of biological role, releases silica from silica-rich substances. In Thermoanaerobacter sp, this protein is Bioremediase.